The following is a 162-amino-acid chain: Sec-independent protein translocase protein TatB (162 aa).

Residues 1 to 21 (MFDIGFLEIIVIMVIALIVIG) form a helical membrane-spanning segment. Positions 86–162 (IQDEFGIDQE…ESTPESSNKS (77 aa)) are disordered. Positions 108–117 (FSGTQFNKAP) are enriched in polar residues. Residues 123 to 135 (PTTEESPSSTPET) are compositionally biased toward low complexity. The span at 147 to 162 (DVSAPSESTPESSNKS) shows a compositional bias: polar residues.

Belongs to the TatB family. In terms of assembly, the Tat system comprises two distinct complexes: a TatABC complex, containing multiple copies of TatA, TatB and TatC subunits, and a separate TatA complex, containing only TatA subunits. Substrates initially bind to the TatABC complex, which probably triggers association of the separate TatA complex to form the active translocon.

The protein resides in the cell inner membrane. In terms of biological role, part of the twin-arginine translocation (Tat) system that transports large folded proteins containing a characteristic twin-arginine motif in their signal peptide across membranes. Together with TatC, TatB is part of a receptor directly interacting with Tat signal peptides. TatB may form an oligomeric binding site that transiently accommodates folded Tat precursor proteins before their translocation. This Hydrogenovibrio crunogenus (strain DSM 25203 / XCL-2) (Thiomicrospira crunogena) protein is Sec-independent protein translocase protein TatB.